A 346-amino-acid chain; its full sequence is Uroporphyrinogen decarboxylase (346 aa).

Substrate is bound by residues 21–25, D71, Y146, S201, and H316; that span reads RQAGR.

The protein belongs to the uroporphyrinogen decarboxylase family. In terms of assembly, homodimer.

The protein resides in the cytoplasm. The catalysed reaction is uroporphyrinogen III + 4 H(+) = coproporphyrinogen III + 4 CO2. It functions in the pathway porphyrin-containing compound metabolism; protoporphyrin-IX biosynthesis; coproporphyrinogen-III from 5-aminolevulinate: step 4/4. In terms of biological role, catalyzes the decarboxylation of four acetate groups of uroporphyrinogen-III to yield coproporphyrinogen-III. In Rickettsia rickettsii (strain Iowa), this protein is Uroporphyrinogen decarboxylase.